The primary structure comprises 333 residues: Methionine import ATP-binding protein MetN 1 (333 aa).

The 240-residue stretch at 2 to 241 folds into the ABC transporter domain; sequence ITFEGVEKVY…PETETAKSFV (240 aa). 38 to 45 contributes to the ATP binding site; it reads GFSGAGKS.

This sequence belongs to the ABC transporter superfamily. Methionine importer (TC 3.A.1.24) family. The complex is composed of two ATP-binding proteins (MetN), two transmembrane proteins (MetI) and a solute-binding protein (MetQ).

It is found in the cell membrane. It carries out the reaction L-methionine(out) + ATP + H2O = L-methionine(in) + ADP + phosphate + H(+). It catalyses the reaction D-methionine(out) + ATP + H2O = D-methionine(in) + ADP + phosphate + H(+). Its function is as follows. Part of the ABC transporter complex MetNIQ involved in methionine import. Responsible for energy coupling to the transport system. This chain is Methionine import ATP-binding protein MetN 1, found in Bacillus licheniformis (strain ATCC 14580 / DSM 13 / JCM 2505 / CCUG 7422 / NBRC 12200 / NCIMB 9375 / NCTC 10341 / NRRL NRS-1264 / Gibson 46).